Here is a 454-residue protein sequence, read N- to C-terminus: Carbamoyl phosphate synthase arginine-specific small chain (454 aa).

Residues 1 to 29 (MMFSRFFKAVPARAPAFSSPLPVYQARTM) constitute a mitochondrion transit peptide. Residues 219-406 (HVAVLDCGVK…IDSVKKYKNS (188 aa)) form the Glutamine amidotransferase type-1 domain. The active-site Nucleophile is Cys-295. Catalysis depends on residues His-379 and Glu-381.

This sequence belongs to the CarA family. As to quaternary structure, heterodimer composed of 2 chains; the small (or glutamine) chain promotes the hydrolysis of glutamine to ammonia, which is used by the large (or ammonia) chain to synthesize carbamoyl phosphate.

The protein resides in the mitochondrion matrix. The catalysed reaction is hydrogencarbonate + L-glutamine + 2 ATP + H2O = carbamoyl phosphate + L-glutamate + 2 ADP + phosphate + 2 H(+). It catalyses the reaction L-glutamine + H2O = L-glutamate + NH4(+). The protein operates within amino-acid biosynthesis; L-arginine biosynthesis; carbamoyl phosphate from bicarbonate: step 1/1. Functionally, small subunit of the arginine-specific carbamoyl phosphate synthase (CPSase). CPSase catalyzes the formation of carbamoyl phosphate from the ammonia moiety of glutamine, carbonate, and phosphate donated by ATP, the first step of the arginine biosynthetic pathway. The small subunit (glutamine amidotransferase) binds and cleaves glutamine to supply the large subunit with the substrate ammonia. The sequence is that of Carbamoyl phosphate synthase arginine-specific small chain (cpa-1) from Emericella nidulans (strain FGSC A4 / ATCC 38163 / CBS 112.46 / NRRL 194 / M139) (Aspergillus nidulans).